Here is a 107-residue protein sequence, read N- to C-terminus: Ferredoxin Fdx8 (107 aa).

4Fe-4S ferredoxin-type domains follow at residues 1–31 (MAYVIAEPCVATCDTACVPVCPVDCIHGPLA) and 50–79 (LQLYIDPESCICCGACENECPVGAIFDEDE). The [4Fe-4S] cluster site is built by cysteine 9, cysteine 13, cysteine 17, cysteine 21, cysteine 59, cysteine 62, cysteine 65, and cysteine 69.

[4Fe-4S] cluster is required as a cofactor.

Ferredoxins are iron-sulfur proteins that transfer electrons in a wide variety of metabolic reactions. Fdx2 can receive electrons from both FdR_A and FdR_B ferredoxin reductases, with a preference for FdR_B compared with FdR_A, and transfer the electrons to the cytochrome P450 CYP260A1. The protein is Ferredoxin Fdx8 of Sorangium cellulosum (strain So ce56) (Polyangium cellulosum (strain So ce56)).